We begin with the raw amino-acid sequence, 37 residues long: Large ribosomal subunit protein bL36 (37 aa).

Belongs to the bacterial ribosomal protein bL36 family.

This Synechococcus sp. (strain CC9605) protein is Large ribosomal subunit protein bL36.